Consider the following 469-residue polypeptide: MYEAVIGLEVHLHLKTRTKMFCGCRADYFGAEPNTHTCPVCLGLPGALPVPNRVAVEHGLRLALALGAEVPERLVFHRKNYFYPDLPKNYQISQYDLPLGRGGSLPLGERRVRIKRLHLEEDAGKSLHLEGRTLLDLNRAGSPLIELVTEPDLKTPEEARLFLQRIQALVQTLGISDASPEEGKLRADVNVSVRRVGEPLGTKVEIKNLNSFKSVQRALEYEIRRQTEILRRGEKVKQATMGFEEGSGKTYPMRTKEEEADYRYFPEPDLPPVAIPRDWLEEVRRSLPELPWEKEARYRALGIKEKDAEVLAYTPSLARFLDQALPLGLASPQALANWLLADVAGLLHERGLRLEETRLSPEGLARLVGLFERGEVTSRVAKSLLPEVLEGQDPEALVRERGLKVVADEGALKALVAEAIAAMPEAAESVRQGKVKALDALVGQVMRKTRGQARPDLVRRLLLEALGVG.

Belongs to the GatB/GatE family. GatB subfamily. Heterotrimer of A, B and C subunits.

It catalyses the reaction L-glutamyl-tRNA(Gln) + L-glutamine + ATP + H2O = L-glutaminyl-tRNA(Gln) + L-glutamate + ADP + phosphate + H(+). The catalysed reaction is L-aspartyl-tRNA(Asn) + L-glutamine + ATP + H2O = L-asparaginyl-tRNA(Asn) + L-glutamate + ADP + phosphate + 2 H(+). In terms of biological role, allows the formation of correctly charged Asn-tRNA(Asn) or Gln-tRNA(Gln) through the transamidation of misacylated Asp-tRNA(Asn) or Glu-tRNA(Gln) in organisms which lack either or both of asparaginyl-tRNA or glutaminyl-tRNA synthetases. The reaction takes place in the presence of glutamine and ATP through an activated phospho-Asp-tRNA(Asn) or phospho-Glu-tRNA(Gln). The sequence is that of Aspartyl/glutamyl-tRNA(Asn/Gln) amidotransferase subunit B from Thermus thermophilus (strain ATCC 27634 / DSM 579 / HB8).